The chain runs to 93 residues: CRISPR-associated endoribonuclease Cas2 (93 aa).

Position 13 (D13) interacts with Mg(2+).

The protein belongs to the CRISPR-associated endoribonuclease Cas2 protein family. In terms of assembly, homodimer, forms a heterotetramer with a Cas1 homodimer. Mg(2+) is required as a cofactor.

Its function is as follows. CRISPR (clustered regularly interspaced short palindromic repeat), is an adaptive immune system that provides protection against mobile genetic elements (viruses, transposable elements and conjugative plasmids). CRISPR clusters contain sequences complementary to antecedent mobile elements and target invading nucleic acids. CRISPR clusters are transcribed and processed into CRISPR RNA (crRNA). Functions as a ssRNA-specific endoribonuclease. Involved in the integration of spacer DNA into the CRISPR cassette. This Korarchaeum cryptofilum (strain OPF8) protein is CRISPR-associated endoribonuclease Cas2.